The primary structure comprises 151 residues: UPF0561 protein C2orf68 homolog (151 aa).

The segment at 1 to 89 is disordered; the sequence is MEEEGEAQGR…TLKDEPNDNG (89 aa). Composition is skewed to basic and acidic residues over residues 32–46 and 70–85; these read LARD…QAKE and RQRE…KDEP.

It belongs to the UPF0561 family.

This Xenopus laevis (African clawed frog) protein is UPF0561 protein C2orf68 homolog.